A 198-amino-acid chain; its full sequence is Recombination protein RecR (198 aa).

Residues 57-72 form a C4-type zinc finger; the sequence is CDKCNTFTEAQICEVC. The Toprim domain maps to 80 to 175; sequence TLLCVVETPA…AVTRLARGVP (96 aa).

It belongs to the RecR family.

Functionally, may play a role in DNA repair. It seems to be involved in an RecBC-independent recombinational process of DNA repair. It may act with RecF and RecO. This is Recombination protein RecR from Burkholderia multivorans (strain ATCC 17616 / 249).